Reading from the N-terminus, the 197-residue chain is ATP-dependent Clp protease proteolytic subunit 2 (197 aa).

S101 acts as the Nucleophile in catalysis. Residue H126 is part of the active site.

Belongs to the peptidase S14 family. Fourteen ClpP subunits assemble into 2 heptameric rings which stack back to back to give a disk-like structure with a central cavity, resembling the structure of eukaryotic proteasomes.

The protein resides in the cytoplasm. It catalyses the reaction Hydrolysis of proteins to small peptides in the presence of ATP and magnesium. alpha-casein is the usual test substrate. In the absence of ATP, only oligopeptides shorter than five residues are hydrolyzed (such as succinyl-Leu-Tyr-|-NHMec, and Leu-Tyr-Leu-|-Tyr-Trp, in which cleavage of the -Tyr-|-Leu- and -Tyr-|-Trp bonds also occurs).. Cleaves peptides in various proteins in a process that requires ATP hydrolysis. Has a chymotrypsin-like activity. Plays a major role in the degradation of misfolded proteins. This Trichormus variabilis (strain ATCC 29413 / PCC 7937) (Anabaena variabilis) protein is ATP-dependent Clp protease proteolytic subunit 2.